Reading from the N-terminus, the 361-residue chain is MNSSLATYWRALASGTRRSLPDRSLLSLLVPFSLLYALIQRLRAVLYRVRLLKSRRLPRPVISVGNLTVGGTGKTPVTAHIARWLLAEGYRVAVLSRGYGGSLEGHTAVVSDGRTVMMEAEQCGDEPFLLSSTIPGLMVVMGSDRFSAGMLAMEQLAPDVFLLDDGYQHLRLTRDLNILLLDHALPFGNGWTLPAGVLREPTSAAGRADLVIRTRCPRIAPCPSPLPGIPSCTARHSLGNVIPLGNGAAFPMESLRGRRVLAFAGIADPYGFFEELREQGLNLVAELAMPDHVAYDDNRIAEIGRRLHGSGAEFAVTTEKDGVKLLGLQRECAEKILLARLELIIADPAPLTDALRNLLQK.

68 to 75 (TVGGTGKT) provides a ligand contact to ATP.

This sequence belongs to the LpxK family.

It catalyses the reaction a lipid A disaccharide + ATP = a lipid IVA + ADP + H(+). It functions in the pathway glycolipid biosynthesis; lipid IV(A) biosynthesis; lipid IV(A) from (3R)-3-hydroxytetradecanoyl-[acyl-carrier-protein] and UDP-N-acetyl-alpha-D-glucosamine: step 6/6. Transfers the gamma-phosphate of ATP to the 4'-position of a tetraacyldisaccharide 1-phosphate intermediate (termed DS-1-P) to form tetraacyldisaccharide 1,4'-bis-phosphate (lipid IVA). The sequence is that of Tetraacyldisaccharide 4'-kinase from Pelobacter propionicus (strain DSM 2379 / NBRC 103807 / OttBd1).